We begin with the raw amino-acid sequence, 479 residues long: MAQHAVYFPDAFLTQMREAMPSTLSFDEFISACQRPLRRSIRINTLKISVADFLALIAPYGWSLTPIPWCHEGFWIERDDEEALPLGSTAEHLSGLFYIQEASSMLPVAALFADDNHPQRVMDMAAAPGSKTTQIAARMGNRGTILANEFSASRVKVLHANISRCGIANTALTHFDGRVFGAALPEMFDAILLDAPCSGEGVVRKDPDALKNWSPESNLDIAATQRELLDSAFHALRPGGTLVYSTCTLNRQENEAVCLWLKETYADAVEFLPLGDLFPDADRALTPEGFLHVFPQIYDCEGFFVARLRKMSSLPAMPAPGYKVGAFPFTPLKGREALHVTQAANAVGLLWDENLHLWQREKEVWLFPAEIESLIGKVRFSRLGIKLAESHNKGYRWQHEATIALACPTHAHAFELSVQEAEEWYRGRDIYPQTPPAADDVLVTFQHQPLGLAKRIGARIKNSYPRELVRDGKLFTGNS.

S-adenosyl-L-methionine is bound by residues 125–131 (AAAPGSK), Glu-149, Asp-176, and Asp-194. The active-site Nucleophile is the Cys-247.

Belongs to the class I-like SAM-binding methyltransferase superfamily. RsmB/NOP family.

It localises to the cytoplasm. The catalysed reaction is cytidine(1407) in 16S rRNA + S-adenosyl-L-methionine = 5-methylcytidine(1407) in 16S rRNA + S-adenosyl-L-homocysteine + H(+). Its function is as follows. Specifically methylates the cytosine at position 1407 (m5C1407) of 16S rRNA. This is Ribosomal RNA small subunit methyltransferase F from Salmonella paratyphi C (strain RKS4594).